The following is a 692-amino-acid chain: DNA-binding protein RFX2 (692 aa).

Residues M1–S26 form a disordered region. S26 is subject to Phosphoserine. Residues T169 to P244 constitute a DNA-binding region (RFX-type winged-helix). The tract at residues R261–A296 is disordered. The span at A285–E294 shows a compositional bias: polar residues. S386 bears the Phosphoserine mark. Residues D660–P685 show a composition bias toward basic and acidic residues. The disordered stretch occupies residues D660–I692.

This sequence belongs to the RFX family. In terms of assembly, homodimer; probably only forms homodimers in testis. Heterodimer; heterodimerizes with RFX1 and RFX3. In terms of tissue distribution, expressed at highest level in testis. Expressed at lower level in thymus. Also expressed in stomach, kidney, liver, brain and heart. Weakly expressed in spleen and lung. Within testis, most abundantly present in spermatocytes: present from pachytene spermatocytes to early spermatids (at protein level). Also present in non-germinal tissues.

The protein localises to the nucleus. The protein resides in the cytoplasm. Functionally, transcription factor that acts as a key regulator of spermatogenesis. Acts by regulating expression of genes required for the haploid phase during spermiogenesis, such as genes required for cilium assembly and function. Recognizes and binds the X-box, a regulatory motif with DNA sequence 5'-GTNRCC(0-3N)RGYAAC-3' present on promoters. Probably activates transcription of the testis-specific histone gene H1-6. This Rattus norvegicus (Rat) protein is DNA-binding protein RFX2 (Rfx2).